The chain runs to 175 residues: Sialidase 85-1.3 (175 aa).

It belongs to the glycosyl hydrolase 33 family.

The enzyme catalyses Hydrolysis of alpha-(2-&gt;3)-, alpha-(2-&gt;6)-, alpha-(2-&gt;8)- glycosidic linkages of terminal sialic acid residues in oligosaccharides, glycoproteins, glycolipids, colominic acid and synthetic substrates.. Functionally, developmentally regulated neuraminidase implicated in parasite invasion of cells. May contribute to the pathology during T.cruzi infection by cleaving sialic acid from cells of the immune system. The chain is Sialidase 85-1.3 (SA85-1.3) from Trypanosoma cruzi.